The following is a 456-amino-acid chain: Enolase (456 aa).

A (2R)-2-phosphoglycerate-binding site is contributed by Gln-169. Glu-211 (proton donor) is an active-site residue. Asp-252, Glu-314, and Asp-341 together coordinate Mg(2+). (2R)-2-phosphoglycerate is bound by residues Lys-366, Arg-395, Ser-396, and Lys-417. The active-site Proton acceptor is the Lys-366.

The protein belongs to the enolase family. Mg(2+) serves as cofactor.

The protein localises to the cytoplasm. The protein resides in the secreted. Its subcellular location is the cell surface. It carries out the reaction (2R)-2-phosphoglycerate = phosphoenolpyruvate + H2O. It participates in carbohydrate degradation; glycolysis; pyruvate from D-glyceraldehyde 3-phosphate: step 4/5. Catalyzes the reversible conversion of 2-phosphoglycerate (2-PG) into phosphoenolpyruvate (PEP). It is essential for the degradation of carbohydrates via glycolysis. This chain is Enolase, found in Metamycoplasma arthritidis (strain 158L3-1) (Mycoplasma arthritidis).